The chain runs to 313 residues: Sideroflexin-4 (313 aa).

Helical transmembrane passes span 87–107 (AALL…VKSL), 141–161 (LLLG…PRLL), 175–191 (FIPV…NVIA), 230–247 (VVLF…AYFF), and 269–289 (VLVM…IGRI).

The protein belongs to the sideroflexin family.

Its subcellular location is the mitochondrion inner membrane. Functionally, mitochondrial amino-acid transporter. Does not act as a serine transporter: not able to mediate transport of serine into mitochondria. This Bos taurus (Bovine) protein is Sideroflexin-4.